The primary structure comprises 79 residues: Conotoxin Vi6.3 (79 aa).

The signal sequence occupies residues 1 to 22 (MKLTCVLIITVLFLTASQLITA). A propeptide spanning residues 23–47 (DYSRDQRQYRAVRLGDEMRNFKGAR) is cleaved from the precursor. 3 cysteine pairs are disulfide-bonded: Cys49–Cys62, Cys56–Cys67, and Cys61–Cys77. 2 positions are modified to 4-hydroxyproline: Pro60 and Pro63.

The protein belongs to the conotoxin O1 superfamily. Expressed by the venom duct.

The protein localises to the secreted. Functionally, ion channel inhibitor that inhibits the increase in intracellular calcium upon depolarization in DRG neurons. In vivo, both intraperitoneal and intracranial injections into mice induce hyperactivity. The sequence is that of Conotoxin Vi6.3 from Conus virgo (Virgin cone).